The primary structure comprises 151 residues: Mitochondrial intermembrane space import and assembly protein 40 homolog (151 aa).

Residues 1-35 are disordered; that stretch reads MGQGLSQPAQAVEEPSPPAVEAAPSSSPSPAPAPS. Over residues 7–26 the composition is skewed to low complexity; the sequence is QPAQAVEEPSPPAVEAAPSS. Cystine bridges form between cysteine 65/cysteine 67, cysteine 76/cysteine 109, and cysteine 86/cysteine 99. One can recognise a CHCH domain in the interval 73–117; the sequence is NGPCGSQFVDAFSCFLKSTEEEKGSDCVKPFIALQDCIKINPEAF. Short sequence motifs (cx9C motif) lie at residues 76–86 and 99–109; these read CGSQFVDAFSC and CVKPFIALQDC. The disordered stretch occupies residues 123–151; sequence EEEENDEEAEKSNLKVRAPAWSRESKPKL.

It is found in the mitochondrion intermembrane space. The protein localises to the peroxisome matrix. In terms of biological role, required for the import and folding of small cysteine-containing proteins in the mitochondrial intermembrane space. This chain is Mitochondrial intermembrane space import and assembly protein 40 homolog, found in Oryza sativa subsp. japonica (Rice).